We begin with the raw amino-acid sequence, 699 residues long: Glycine--tRNA ligase beta subunit (699 aa).

This sequence belongs to the class-II aminoacyl-tRNA synthetase family. As to quaternary structure, tetramer of two alpha and two beta subunits.

Its subcellular location is the cytoplasm. It carries out the reaction tRNA(Gly) + glycine + ATP = glycyl-tRNA(Gly) + AMP + diphosphate. In Baumannia cicadellinicola subsp. Homalodisca coagulata, this protein is Glycine--tRNA ligase beta subunit.